The sequence spans 292 residues: Protease HtpX (292 aa).

2 helical membrane passes run 4-24 and 34-54; these read IALF…VLSL and GLMI…LLMS. A Zn(2+)-binding site is contributed by histidine 139. Residue glutamate 140 is part of the active site. Position 143 (histidine 143) interacts with Zn(2+). Helical transmembrane passes span 158–178 and 192–212; these read IVNT…AGFL and MIYF…ASII. Position 221 (glutamate 221) interacts with Zn(2+).

This sequence belongs to the peptidase M48B family. It depends on Zn(2+) as a cofactor.

Its subcellular location is the cell inner membrane. This chain is Protease HtpX, found in Serratia proteamaculans (strain 568).